A 357-amino-acid chain; its full sequence is 4-hydroxy-2-oxovalerate aldolase (357 aa).

The disordered stretch occupies residues 1–21 (MSQEAARDAAAGRPVQIHDPT). Residues 15-265 (VQIHDPTLRD…RTGIDLYRLL (251 aa)) enclose the Pyruvate carboxyltransferase domain. 23–24 (RD) serves as a coordination point for substrate. Asp24 contributes to the Mn(2+) binding site. The active-site Proton acceptor is His27. Residues Ser177 and His204 each contribute to the substrate site. Residues His204 and His206 each contribute to the Mn(2+) site.

The protein belongs to the 4-hydroxy-2-oxovalerate aldolase family.

The enzyme catalyses (S)-4-hydroxy-2-oxopentanoate = acetaldehyde + pyruvate. Functionally, involved in the biosynthesis of the peptidyl nucleoside antibiotic nikkomycin. This chain is 4-hydroxy-2-oxovalerate aldolase, found in Streptomyces tendae.